The chain runs to 215 residues: 16S rRNA (adenine(1408)-N(1))-methyltransferase (215 aa).

S-adenosyl-L-methionine contacts are provided by residues glycine 32, aspartate 55, 87 to 88, 102 to 107, and 191 to 193; these read AE, LMPWGS, and TSW.

This sequence belongs to the methyltransferase superfamily. Kanamycin-apramycin resistance family.

It carries out the reaction adenosine(1408) in 16S rRNA + S-adenosyl-L-methionine = N(1)-methyladenosine(1408) in 16S rRNA + S-adenosyl-L-homocysteine + H(+). Its function is as follows. Specifically methylates the N(1) position of adenine 1408 in 16S rRNA. Confers resistance to various aminoglycosides. The sequence is that of 16S rRNA (adenine(1408)-N(1))-methyltransferase (kamB) from Streptoalloteichus hindustanus.